We begin with the raw amino-acid sequence, 388 residues long: Queuine tRNA-ribosyltransferase (388 aa).

D91 (proton acceptor) is an active-site residue. Substrate is bound by residues D91–Y95, D145, Q190, and G217. The interval G248–D254 is RNA binding. D267 serves as the catalytic Nucleophile. The RNA binding; important for wobble base 34 recognition stretch occupies residues T272 to R276. Residues C305, C307, C310, and H336 each contribute to the Zn(2+) site.

It belongs to the queuine tRNA-ribosyltransferase family. In terms of assembly, homodimer. Within each dimer, one monomer is responsible for RNA recognition and catalysis, while the other monomer binds to the replacement base PreQ1. It depends on Zn(2+) as a cofactor.

The enzyme catalyses 7-aminomethyl-7-carbaguanine + guanosine(34) in tRNA = 7-aminomethyl-7-carbaguanosine(34) in tRNA + guanine. The protein operates within tRNA modification; tRNA-queuosine biosynthesis. Catalyzes the base-exchange of a guanine (G) residue with the queuine precursor 7-aminomethyl-7-deazaguanine (PreQ1) at position 34 (anticodon wobble position) in tRNAs with GU(N) anticodons (tRNA-Asp, -Asn, -His and -Tyr). Catalysis occurs through a double-displacement mechanism. The nucleophile active site attacks the C1' of nucleotide 34 to detach the guanine base from the RNA, forming a covalent enzyme-RNA intermediate. The proton acceptor active site deprotonates the incoming PreQ1, allowing a nucleophilic attack on the C1' of the ribose to form the product. After dissociation, two additional enzymatic reactions on the tRNA convert PreQ1 to queuine (Q), resulting in the hypermodified nucleoside queuosine (7-(((4,5-cis-dihydroxy-2-cyclopenten-1-yl)amino)methyl)-7-deazaguanosine). The chain is Queuine tRNA-ribosyltransferase from Dictyoglomus turgidum (strain DSM 6724 / Z-1310).